The following is an 881-amino-acid chain: Serine/threonine-protein kinase greatwall (881 aa).

A disordered region spans residues 1–20 (MSTVEPLSDEGVAAGPRRIE). Residues 30–837 (FTIVKPISRG…LKELKHHPLF (808 aa)) enclose the Protein kinase domain. ATP-binding positions include 36 to 44 (ISRGAFGKV) and K57. The Proton acceptor role is filled by D151. Disordered regions lie at residues 310 to 345 (SPRLEKDVKQTEDEMCSTGTSNSRPPLPSSREVLNS) and 706 to 732 (ITPLQKTPRQGDAGTPYRTPKSVRRGA). Over residues 312 to 321 (RLEKDVKQTE) the composition is skewed to basic and acidic residues. T743 carries the phosphothreonine; by CDK1 modification. The AGC-kinase C-terminal domain maps to 838-881 (HGVDWDNLQNQPMPFIPQPDDETDTSYFEARNNAQHLTVSGFSL).

Belongs to the protein kinase superfamily. AGC Ser/Thr protein kinase family. Phosphorylation at Thr-743 by CDK1 during M phase activates its kinase activity. Maximum phosphorylation occurs in prometaphase.

The protein localises to the cytoplasm. Its subcellular location is the cytoskeleton. It localises to the microtubule organizing center. The protein resides in the centrosome. It is found in the nucleus. It carries out the reaction L-seryl-[protein] + ATP = O-phospho-L-seryl-[protein] + ADP + H(+). The catalysed reaction is L-threonyl-[protein] + ATP = O-phospho-L-threonyl-[protein] + ADP + H(+). Its function is as follows. Serine/threonine kinase that plays a key role in M phase by acting as a regulator of mitosis entry and maintenance. Acts by promoting the inactivation of protein phosphatase 2A (PP2A) during M phase: does not directly inhibit PP2A but acts by mediating phosphorylation and subsequent activation of ARPP19 and ENSA at 'Ser-62' and 'Ser-67', respectively. ARPP19 and ENSA are phosphatase inhibitors that specifically inhibit the PPP2R2D (PR55-delta) subunit of PP2A. Inactivation of PP2A during M phase is essential to keep cyclin-B1-CDK1 activity high. Following DNA damage, it is also involved in checkpoint recovery by being inhibited. This chain is Serine/threonine-protein kinase greatwall (MASTL), found in Gallus gallus (Chicken).